Reading from the N-terminus, the 904-residue chain is Pyrimidine pathway regulatory protein 1 (904 aa).

Over residues 1–11 (MKQKKFNSKKS) the composition is skewed to basic residues. The segment at 1 to 27 (MKQKKFNSKKSNRTDLSKRGDSPNIGI) is disordered. A compositionally biased stretch (basic and acidic residues) spans 12-21 (NRTDLSKRGD). Zn(2+) is bound by residues cysteine 34, cysteine 37, cysteine 44, cysteine 51, cysteine 54, and cysteine 61. The segment at residues 34 to 61 (CKRCRLKKIKCDQEFPSCKRCAKLEVPC) is a DNA-binding region (zn(2)-C6 fungal-type). The interval 883 to 904 (GNEGESSYDISKGKNSESGGIF) is disordered.

Binds DNA as a homodimer.

The protein resides in the nucleus. Its function is as follows. Positive regulator of URA1 and URA3 expression. The protein is Pyrimidine pathway regulatory protein 1 (PPR1) of Saccharomyces cerevisiae (strain ATCC 204508 / S288c) (Baker's yeast).